The following is a 401-amino-acid chain: Sodium/glutamate symporter (401 aa).

At 1–6 (MFHLDT) the chain is on the periplasmic side. Residues 7 to 24 (LATLVAATLTLLLGRKLV) form a helical membrane-spanning segment. Topologically, residues 25-32 (HSVSFLKK) are cytoplasmic. A helical transmembrane segment spans residues 33–52 (YTIPEPVAGGLLVALALLVL). Residues 53 to 69 (KKSMGWEVNFDMSLRDP) are Periplasmic-facing. A helical membrane pass occupies residues 70–87 (LMLAFFATIGLNANIASL). Topologically, residues 88 to 93 (RAGGRV) are cytoplasmic. Residues 94–116 (VGIFLIVVVGLLVMQNAIGIGMA) form a helical membrane-spanning segment. At 117 to 156 (SLLGLDPLMGLLAGSITLSGGHGTGAAWSKLFIERYGFTN) the chain is on the periplasmic side. A helical membrane pass occupies residues 157–179 (ATEVAMACATFGLVLGGLIGGPV). The Cytoplasmic segment spans residues 180-212 (ARYLVKHSTTPNGIPDDQEVPTAFEKPDVGRMI). The chain crosses the membrane as a helical span at residues 213–235 (TSLVLIETIALIAICLTVGKIVA). Topologically, residues 236–244 (QLLAGTAFE) are periplasmic. Residues 245-267 (LPTFVCVLFVGVILSNGLSIMGF) form a helical membrane-spanning segment. Residues 268 to 276 (YRVFERAVS) lie on the Cytoplasmic side of the membrane. Residues 277 to 292 (VLGNVSLSLFLAMALM) form a helical membrane-spanning segment. Residues 293–301 (GLKLWELAS) lie on the Periplasmic side of the membrane. The helical transmembrane segment at 302-324 (LALPMLAILVVQTIFMALYAIFV) threads the bilayer. Residues 325 to 367 (TWRMMGKNYDAAVLAAGHCGFGLGATPTAIANMQAITERFGPS) lie on the Cytoplasmic side of the membrane. Residues 368-390 (HMAFLVVPMVGAFFIDIVNALVI) form a helical membrane-spanning segment. At 391–401 (KLYLMLPIFAG) the chain is on the periplasmic side.

It belongs to the glutamate:Na(+) symporter (ESS) (TC 2.A.27) family.

It is found in the cell inner membrane. With respect to regulation, inhibited by the uncoupler carbonylcyanide m-chlorophenylhydrazone (CCCP) and the ionophore monensin. Its function is as follows. Catalyzes the sodium-dependent, binding-protein-independent transport of glutamate. The protein is Sodium/glutamate symporter of Escherichia coli (strain K12).